The following is a 223-amino-acid chain: Noggin (223 aa).

A signal peptide spans 1–26 (MDHSQCLVTIYAAAVLLGLRLQQGSC). Asn-61 carries N-linked (GlcNAc...) asparagine glycosylation. Cystine bridges form between Cys-146–Cys-183, Cys-169–Cys-219, Cys-175–Cys-221, and Cys-198–Cys-206.

The protein belongs to the noggin family. In terms of assembly, homodimer.

The protein resides in the secreted. Its function is as follows. Inhibitor of bone morphogenetic proteins (BMP) signaling. Controls somitogenesis by sequestering the BMP-4 activity which in turn differentiates distinct subtypes of the mesoderm along the mediolateral axis. In Gallus gallus (Chicken), this protein is Noggin (NOG).